Consider the following 733-residue polypeptide: Wall-associated receptor kinase 5 (733 aa).

Positions 1–23 (MKVHSLFLMAIFFYLAYTQLVKA) are cleaved as a signal peptide. Over 24–330 (QPRDDCQTRC…IDTPKEEPKY (307 aa)) the chain is Extracellular. N-linked (GlcNAc...) asparagine glycans are attached at residues Asn57, Asn77, Asn110, Asn137, Asn184, Asn206, Asn218, Asn232, and Asn247. The EGF-like 1 domain occupies 231-278 (GNQTCEQVVGRNICGGNSTCFDSTRGKGYNCKCLQGFDGNPYLSDGCQ). 6 cysteine pairs are disulfide-bonded: Cys235–Cys250, Cys244–Cys261, Cys263–Cys277, Cys283–Cys296, Cys290–Cys305, and Cys307–Cys320. The EGF-like 2; calcium-binding domain occupies 279–321 (DINECTTRIHNCSDTSTCENTLGSFHCQCPSGSDLNTTTMSCI). Residue Asn289 is glycosylated (N-linked (GlcNAc...) asparagine). Residue Asn314 is glycosylated (N-linked (GlcNAc...) asparagine). The chain crosses the membrane as a helical span at residues 331 to 351 (LGWTTVLLGTTIGFLIILLTI). Residues 352–733 (SYIQQKMRHR…VTRLDIETGR (382 aa)) lie on the Cytoplasmic side of the membrane. Residue Thr397 is modified to Phosphothreonine. The Protein kinase domain occupies 408-691 (YNESRILGQG…RVKTTKHQWS (284 aa)). ATP-binding positions include 414-422 (LGQGGQGTV) and Lys436. The residue at position 481 (Tyr481) is a Phosphotyrosine. The Proton acceptor role is filled by Asp533. A phosphothreonine mark is found at Thr567 and Thr572. Tyr580 carries the phosphotyrosine modification.

It belongs to the protein kinase superfamily. Ser/Thr protein kinase family. As to expression, predominantly expressed in green tissues such as stems and leaves.

It localises to the membrane. The catalysed reaction is L-seryl-[protein] + ATP = O-phospho-L-seryl-[protein] + ADP + H(+). The enzyme catalyses L-threonyl-[protein] + ATP = O-phospho-L-threonyl-[protein] + ADP + H(+). Functionally, serine/threonine-protein kinase that may function as a signaling receptor of extracellular matrix component. Binding to pectin may have significance in the control of cell expansion, morphogenesis and development. This Arabidopsis thaliana (Mouse-ear cress) protein is Wall-associated receptor kinase 5 (WAK5).